The sequence spans 215 residues: Serine acetyltransferase (215 aa).

Belongs to the transferase hexapeptide repeat family.

It is found in the cytoplasm. It catalyses the reaction L-serine + acetyl-CoA = O-acetyl-L-serine + CoA. Its pathway is amino-acid biosynthesis; L-cysteine biosynthesis; L-cysteine from L-serine: step 1/2. The sequence is that of Serine acetyltransferase (cysE) from Staphylococcus aureus (strain MRSA252).